The primary structure comprises 200 residues: NAD(P)H dehydrogenase (quinone) (200 aa).

In terms of domain architecture, Flavodoxin-like spans 4–191 (VLVLYYSSYG…DIARYQGKRV (188 aa)). Residues 10-15 (SSYGHV) and 79-81 (TRF) contribute to the FMN site. Y12 provides a ligand contact to NAD(+). W99 is a substrate binding site. FMN-binding positions include 114-120 (STGTQHG) and H135.

Belongs to the WrbA family. The cofactor is FMN.

It catalyses the reaction a quinone + NADH + H(+) = a quinol + NAD(+). It carries out the reaction a quinone + NADPH + H(+) = a quinol + NADP(+). The sequence is that of NAD(P)H dehydrogenase (quinone) from Burkholderia lata (strain ATCC 17760 / DSM 23089 / LMG 22485 / NCIMB 9086 / R18194 / 383).